The chain runs to 1364 residues: Serine protease SepA autotransporter (1364 aa).

Residues 1–56 (MNKIYYLKYCHITKSLIAVSELARRVTCKSHRRLSRRVILTSVAALSLSSAWPALS) form the signal peptide. A Peptidase S6 domain is found at 57-307 (ATVSAEIPYQ…VVTTQDFLGQ (251 aa)). Residues H134, D162, and S267 each act as charge relay system in the active site. The 267-residue stretch at 1098–1364 (DTQGDAGVWA…AINANFRYVF (267 aa)) folds into the Autotransporter domain.

Post-translationally, cleaved to release the mature protein from the outer membrane. Cleavage is performed by an unknown protease.

The protein resides in the periplasm. It is found in the secreted. The protein localises to the cell surface. It localises to the cell outer membrane. With respect to regulation, inhibited by the serine protease inhibitor PMSF, but not by benzamidine, alpha 1-antitrypsin, alpha 1-antichymotrypsin. Not inhibited by metalloprotease inhibitors such as EDTA and orthophenanthroline. Its function is as follows. Major protein secreted in laboratory media showing proteolytic activity. May be involved in invasion and destruction of host intestinal epithelium. The protein is Serine protease SepA autotransporter (sepA) of Shigella flexneri.